We begin with the raw amino-acid sequence, 347 residues long: Oocyte-specific homeobox protein 6 (347 aa).

Disordered stretches follow at residues 1–20 (MLQY…HSKF) and 54–86 (PRSP…IQMQ). Residues 72–85 (QESQGPSGKSSIQM) show a composition bias toward polar residues. Residues 145-204 (HRKIRTVYTEEQKCVLKKHFHKCTYPSREQRMALAVLVGVTANEIQIWFKNHRAKSKRES) constitute a DNA-binding region (homeobox).

This sequence belongs to the paired homeobox family. Obox subfamily. Specifically expressed in early embryos.

The protein localises to the nucleus. Its function is as follows. Transcription factor required for zygotic genome activation (ZGA), a critical event in early embryonic development during which the developmental control passes from maternally provided mRNAs to the expression of the zygotic genome after fertilization. This is Oocyte-specific homeobox protein 6 from Mus musculus (Mouse).